The chain runs to 339 residues: Annexin A2 (339 aa).

N-acetylserine is present on serine 2. The interval 2 to 24 (STVHEILCKLSLEGDHSTPPSAY) is S100A10-binding site. Tyrosine 24 carries the phosphotyrosine; by SRC modification. Phosphoserine; by PKC is present on serine 26. Annexin repeat units lie at residues 33-104 (FDAE…GLLK) and 105-176 (TPAQ…ALAK). Lysine 49 bears the N6-acetyllysine; alternate mark. Lysine 49 participates in a covalent cross-link: Glycyl lysine isopeptide (Lys-Gly) (interchain with G-Cter in SUMO1); alternate. Lysine 49 is covalently cross-linked (Glycyl lysine isopeptide (Lys-Gly) (interchain with G-Cter in SUMO2); alternate). N6-acetyllysine is present on lysine 152. The residue at position 184 (serine 184) is a Phosphoserine. Annexin repeat units follow at residues 189–261 (ELID…NLVQ) and 265–336 (NKPL…YLCG). A Phosphotyrosine modification is found at tyrosine 199. N6-acetyllysine is present on lysine 227.

This sequence belongs to the annexin family. In terms of assembly, heterotetramer containing 2 light chains of S100A10/p11 and 2 heavy chains of ANXA2/p36. Interacts with ATP1B1. Interacts with DYSF. Interacts with COCH. Interacts (via repeat Annexin 1) with PCSK9 (via the C-terminal domain); the interaction inhibits the degradation of LDLR. Interacts with CEACAM1 (via the cytoplasmic domain); this interaction is regulated by phosphorylation of CEACAM1. Interacts with APPL2 and APPL1; targets APPL2 to endosomes and acting in parallel to RAB5A. Interacts with S100A4. May interact with UBAP2. Interacts with PLEKHG4B; this interaction is required for PLEKHG4B localization to cell-cell adhesions. (Microbial infection) Interacts with human cytomegalovirus (HCMV). As to quaternary structure, (Microbial infection) Interacts with M.pneumoniae CARDS toxin; CARDS probably uses this protein as a receptor. A portion of internalized CARDS remains associated with intracellular annexin 2. Phosphorylation of Tyr-24 enhances heat stress-induced translocation to the cell surface. In terms of processing, ISGylated.

Its subcellular location is the secreted. It localises to the extracellular space. It is found in the extracellular matrix. The protein resides in the basement membrane. The protein localises to the melanosome. In terms of biological role, calcium-regulated membrane-binding protein whose affinity for calcium is greatly enhanced by anionic phospholipids. It binds two calcium ions with high affinity. May be involved in heat-stress response. Inhibits PCSK9-enhanced LDLR degradation, probably reduces PCSK9 protein levels via a translational mechanism but also competes with LDLR for binding with PCSK9. Binds to endosomes damaged by phagocytosis of particulate wear debris and participates in endosomal membrane stabilization, thereby limiting NLRP3 inflammasome activation. Required for endothelial cell surface plasmin generation and may support fibrinolytic surveillance and neoangiogenesis. Its function is as follows. (Microbial infection) Binds M.pneumoniae CARDS toxin, probably serves as one receptor for this pathogen. When ANXA2 is down-regulated by siRNA, less toxin binds to human cells and less vacuolization (a symptom of M.pneumoniae infection) is seen. In Homo sapiens (Human), this protein is Annexin A2 (ANXA2).